Here is a 580-residue protein sequence, read N- to C-terminus: MGSSRLRVFDPPLERKDSAALSERQLPLPTFDVPYFKYIDEEDEDDEWGSRSQSSTEDDSVDSLLSDRYVVVSGTPEKILEHLLNDLHLAEVQHKETETLLDDFLLTYTVFMTTDDLCQALLRHYSAKKYQGEEENSDVPCRKRKVLHLVSQWISLYKDWLHEDEHSKMFLKTIYRNVLDDVYEYPILEKELKEFQKILGMHRRHTVDEYSPQKKNKALFHQFSLKENWLQHRGTVAETEEIFCHVYVTEHSYISVKAKVSSTAQEILKVVAEKLQRAEEDLALVAIMFSGEKHEFQPNDLAISKSLEASGRIYVYRKDLADTLNPFAENEESQQRSMRILGMNTWDLALELMSFDWSLFNSIHEQELIYFTFSRQGSGEHTVNLSLLLQRCNEVQLWVATEILLCSQLGKRVQLVKKFIKIAAHCKAQQNLNSFFAIVMGLNTASVSRLSQTWEKIPGKFKKLFSELESLTDPSLNHKAYRDAFKKMKPPKIPFMPLLLKDVTFIHEGNKTFLDNLVNFEKLHMIADTVRTLRHCRTNQFGSDMSPKEQQELKSYVNHLYVIDSQQALFELSHRLEPRA.

An N-terminal Ras-GEF domain is found at 67-200 (DRYVVVSGTP…ELKEFQKILG (134 aa)). The 236-residue stretch at 344 to 579 (NTWDLALELM…FELSHRLEPR (236 aa)) folds into the Ras-GEF domain.

In the embryo, expressed in young neurons of the developing telencephalon, diencephalon and hindbrain. Not expressed in progenitor cells in the ventricular zone.

It is found in the nucleus. Functionally, guanine nucleotide exchange factor (GEF) for RAP1A, RAP2A and MRAS/M-Ras-GTP. Its association with MRAS inhibits Rap1 activation. The sequence is that of Rap guanine nucleotide exchange factor 5 (Rapgef5) from Rattus norvegicus (Rat).